A 486-amino-acid chain; its full sequence is UDP-N-acetylmuramoyl-L-alanyl-D-glutamate--2,6-diaminopimelate ligase (486 aa).

S33 contributes to the UDP-N-acetyl-alpha-D-muramoyl-L-alanyl-D-glutamate binding site. 110-116 (GTNGKTS) contacts ATP. UDP-N-acetyl-alpha-D-muramoyl-L-alanyl-D-glutamate contacts are provided by residues 152–153 (TT), S179, Q185, and R187. K219 carries the post-translational modification N6-carboxylysine. Meso-2,6-diaminopimelate contacts are provided by residues R383, 407–410 (DNPR), G455, and E459. The Meso-diaminopimelate recognition motif signature appears at 407-410 (DNPR).

The protein belongs to the MurCDEF family. MurE subfamily. Mg(2+) serves as cofactor. Post-translationally, carboxylation is probably crucial for Mg(2+) binding and, consequently, for the gamma-phosphate positioning of ATP.

The protein resides in the cytoplasm. It catalyses the reaction UDP-N-acetyl-alpha-D-muramoyl-L-alanyl-D-glutamate + meso-2,6-diaminopimelate + ATP = UDP-N-acetyl-alpha-D-muramoyl-L-alanyl-gamma-D-glutamyl-meso-2,6-diaminopimelate + ADP + phosphate + H(+). Its pathway is cell wall biogenesis; peptidoglycan biosynthesis. Functionally, catalyzes the addition of meso-diaminopimelic acid to the nucleotide precursor UDP-N-acetylmuramoyl-L-alanyl-D-glutamate (UMAG) in the biosynthesis of bacterial cell-wall peptidoglycan. The protein is UDP-N-acetylmuramoyl-L-alanyl-D-glutamate--2,6-diaminopimelate ligase of Zymomonas mobilis subsp. mobilis (strain ATCC 31821 / ZM4 / CP4).